The chain runs to 612 residues: Cryptochrome-2 (612 aa).

The tract at residues 1-485 (MKMDKKTIVW…TARELLAKAI (485 aa)) is CNT2, binds chromophores to sense blue light and mediate CRY dimerization. In terms of domain architecture, Photolyase/cryptochrome alpha/beta spans 5–134 (KKTIVWFRRD…SVQSYNGDLL (130 aa)). Tyr232 contacts FAD. Mg(2+) contacts are provided by Asn235 and Ser243. 244-248 (TSLLS) serves as a coordination point for FAD. A Mg(2+)-binding site is contributed by His355. Residues Asn356 and 387–389 (DAD) contribute to the FAD site. 356-357 (NR) lines the ATP pocket. Position 406 (Asp406) interacts with ATP. A CCT2/CCE2, mediates blue light signaling region spans residues 486–612 (SRTREAQIMI…TTSLGKNGCK (127 aa)). The interval 539-576 (GSKRVKPEEEEERDMKKSRGFDERELFSTAESSSSSSV) is disordered. The short motif at 541–555 (KRVKPEEEEERDMKK) is the Nuclear localization signal element. Residues 551–564 (RDMKKSRGFDEREL) show a composition bias toward basic and acidic residues. Ser587 is modified (phosphoserine; by CK1). The segment at 590–612 (KNLEGIQDSSDQITTSLGKNGCK) is disordered. Over residues 596–612 (QDSSDQITTSLGKNGCK) the composition is skewed to polar residues. Residues Ser598 and Ser599 each carry the phosphoserine modification. At Thr603 the chain carries Phosphothreonine; by CK1. Position 605 is a phosphoserine (Ser605).

It belongs to the DNA photolyase class-1 family. As to quaternary structure, homodimer. Blue-light dependent dimerization. Interacts with COP1 and PHYB in the nucleus. Binds reversibly to CIBs proteins such as BHLH63/CIB1, BHLH78/CIB2, BHLH74/CIB4 and BHLH76/CIB5 after blue light illumination to stimulate their transcription factor activities. Interacts with PIF4 and PIF5 in the nucleus in response to low blue light (LBL). Binds to SPA1 in response to blue light, this interaction prevents SPA1/COP1 complex formation but stimulates interaction with COP1, and thus avoid COP1-dependent degradation of the transcription factors CO and HY5 by the proteasome and promotes hypocotyl elongation and floral initiation. Binding to ATP mediates conformational changes which facilitate flavin binding. Interacts with BIC1 in both darkness and light. Interacts with NRP. FAD is required as a cofactor. (6R)-5,10-methylene-5,6,7,8-tetrahydrofolate serves as cofactor. In terms of processing, phosphorylated by CK1.3 and CK1.4; in response to blue light. Required for degradation. Adopts an open conformation when phosphorylated upon photoexcitation and thus interacts with signaling partner proteins. Not autophosphorylated, even in complex with FAD cofactor. Post-translationally, ubiquitinated; in response to blue light. As to expression, mostly expressed in the shoot meristems and root tips, and, to a lower extent, in the cotyledons, hypocotyls, and roots.

Its subcellular location is the nucleus. The protein localises to the PML body. It localises to the cytoplasm. Photoreceptor that mediates primarily blue light inhibition of hypocotyl elongation and photoperiodic control of floral initiation, and regulates other light responses, including circadian rhythms, tropic growth, stomata opening, guard cell development, root development, bacterial and viral pathogen responses, abiotic stress responses, cell cycles, programmed cell death, apical dominance, fruit and ovule development, seed dormancy, and magnetoreception. Photoexcited cryptochromes interact with signaling partner proteins to alter gene expression at both transcriptional and post-translational levels and, consequently, regulate the corresponding metabolic and developmental programs. Blue-light absorbing flavoprotein that activates reversible flavin photoreduction via an electron transport chain comprising a tryptophan triad (W-321, W-374 and W-397), or via an alternative electron transport that involves small metabolites, including NADPH, NADH, and ATP. The half-life of the activated signaling state is about 16 minutes. Perceives low blue light (LBL) and responds by directly contacting two bHLH transcription factors, PIF4 and PIF5, at chromatin on E-box variant 5'-CA[CT]GTG-3' to promote their activity and stimulate specific gene expression to adapt global physiology (e.g. hypocotyl elongation and hyponastic growth in low blue light). In response to blue light, binds to CIB proteins (e.g. BHLH63/CIB1 and BHLH76/CIB5) to activate transcription and floral initiation. Mediates blue light-induced gene expression, floral initiation and hypocotyl elongation through the interaction with SPA1 that prevents formation of SPA1/COP1 complex but stimulates COP1 binding, and thus inhibits COP1-mediated degradation of transcription factors (e.g. CO and HY5). Promotes flowering time in continuous light (LL). Involved in shortening the circadian clock period, especially at 27 degrees Celsius, in blue light (BL). Required to maintain clock genes expression rhythm. Triggers nuclear accumulation of ROS in response to blue light illumination. Involved in blue light-dependent stomatal opening, transpiration and inhibition of stem and root growth, probably by regulating abscisic acid (ABA). Regulates the timing of flowering by promoting the expression of 'FLOWERING LOCUS T' (FT) in vascular bundles. Negatively regulated by 'FLOWERING LOCUS C' (FLC). General positive regulator of reversible low light-induced chromatin decompaction. Involved in triggering chromatin decondensation during floral transition. Together with phototropins, involved in phototropism regulation by various blue light fluence; blue light attenuates phototropism in high fluence rates (100 umol.m-2.s-1) but enhances phototropism in low fluence rates (&lt;1.0 umol.m-2.s-1). The effect of near-null magnetic field on flowering is altered by changes of blue light cycle and intensity in a CRY1/CRY2-dependent manner. Involved in the strigolactone signaling that regulates hypocotyl growth in response to blue light. Functionally, confers resistance to turnip crinkle virus (TCV) by preventing COP1-mediated proteasome-mediated degradation of RPP8/HRT, thus promoting its stability in light. Exposure to darkness or blue-light induces degradation of CRY2, and in turn of RPP8/HRT, resulting in susceptibility to TCV. The sequence is that of Cryptochrome-2 from Arabidopsis thaliana (Mouse-ear cress).